The chain runs to 994 residues: MADRRVGNRPMGRRGRLEIQSGTCNVCSAPCSSCMHHNAEFSGSKSDESSDENSHGVLASQCSFNGDNLLRSSGVNAPGSSHNTSSEASHLVNSNHDTSSENAESKEIIRSSDISHGPLLDRPHKDQDSMKVDSCNDHQARSTLGQGKVKEKSGAKNNEEKKNTLTGSSKHSGPRVGKSGENVLLNKADESNTSAMSDSESENDPEMLELDVKVCDTCGDAGREDLLAICSRCSDGAEHTYCMRVMLKKVPKGYWLCEECKFAEKAEKHKLETKRKRESEVNVNTQISSKRHIDKFEAVPDSKRLAVGAQIGSPKRSVLPRMSTLSRETSFKGLEKPTRKLAHYSSFNSHSSDDTESTRSTDSQLQSPKGSFLKSNSFNSLSSRSKVRPVDDDMLPRQKTGNENSSLEVKEGFSKNVGKSMSSRCIDVGSSNCNDSKVKGSKQLKDWSTEANPSASISRGNSSIPYAKSPRDLKDLQSDGKQGSLSKQARHLSRNRLEDIVASVGDSSKNEKCSSSEQISSEAKCKDELAQVDGVPRSREFREAGEKTKDAVGNHQKRNIGEDNNKGNRLRAAVDAALRKKPSFSKNRGLEQSDLPPVSNVDSGCNKALKCLSSKVPVIRDWPVGFQGLPGGHPNLRTDKQTNTVNEKQFTLAGTDATTASQSVEPEVNDPSVQSVMRDLPVAAPNVLSTTSAIPKPEYIWQGDLEVQKSRNLSAMHSGIQAYLSTLASPKVVEVVKQFPEKVTLNEVPRLSSWPAQFQDTGAKEQHVALFFFAKDIESYEKNYKPLVDNMIQKDLALKGNLEGVELLIFASNQLPQDCQRWNMLFFLWGVFRGKKESCSNPPKNTPLPASCVSPNRDTFRHENPSNKKSLTDRTLSRMQSCMKEEDAKEGKACSGTEKENAFSVSYGEGEVDVETEEGEIGVSPQLKYEKTAGPGTVKSADMNQRVNVDDLNKEGLCEGPANKKLKTVTGVETGCSIVRRDTSVHKFASRKFV.

2 disordered regions span residues 39 to 182 (AEFS…SGEN) and 187 to 206 (KADESNTSAMSDSESENDPE). Residues 45-54 (KSDESSDENS) show a composition bias toward basic and acidic residues. Polar residues predominate over residues 60 to 102 (SQCSFNGDNLLRSSGVNAPGSSHNTSSEASHLVNSNHDTSSEN). 2 stretches are compositionally biased toward basic and acidic residues: residues 119-140 (LLDRPHKDQDSMKVDSCNDHQA) and 148-163 (KVKEKSGAKNNEEKKN). The PHD-type zinc-finger motif lies at 212–263 (VKVCDTCGDAGREDLLAICSRCSDGAEHTYCMRVMLKKVPKGYWLCEECKFA). Residues Cys-215, Cys-218, Cys-230, Cys-233, His-239, Cys-242, Cys-257, and Cys-260 each coordinate Zn(2+). Disordered stretches follow at residues 342–567 (AHYS…NNKG) and 839–875 (CSNPPKNTPLPASCVSPNRDTFRHENPSNKKSLTDRT). Low complexity predominate over residues 371–384 (SFLKSNSFNSLSSR). 2 stretches are compositionally biased toward polar residues: residues 417–435 (VGKSMSSRCIDVGSSNCND) and 449–464 (TEANPSASISRGNSSI). Basic and acidic residues-rich tracts occupy residues 469–478 (SPRDLKDLQS), 536–552 (PRSREFREAGEKTKDAV), and 858–875 (DTFRHENPSNKKSLTDRT).

In terms of assembly, component of the ASI1-AIPP1-EDM2 (AAE) RNA regulatory complex composed of at least AIPP1/EDM3, ASI1 and EDM2 and may contain CPL2, AIPP2 and AIPP3/BDT1. Part of the BAH-PHD bivalent histone reader complex that contains AIPP2, PAIPP2 and AIPP3/BDT1; the BAH-PHD module associates with CPL2 to form the BAH-PHD-CPL2 complex (BPC) for transcriptional repression. Binds directly to ASI1, AIPP3/BDT1 and CPL2 but not to PAIPP2. As to expression, expressed ubiquitously.

Together with AIPP3/BDT1 and PAIPP2, cooperates to form a BAH-PHD bivalent histone reader complex able to read histone H3 lysine 27 trimethylation (H3K27me3) and low-methylated H3K4 histone marks in order to regulate transcription, especially to prevent early flowering; promotes AIPP3/BDT1 binding to H3K27me3. CPL2 is subsequently recruited to form a BAH-PHD-CPL2 complex (BPC) in order to silence several H3K27me3 and low-methylated H3K4 enriched loci, including AGO5, via the phosphorylation state-dependent inhibition of Pol II release from the transcriptional start site (e.g. Ser5P-Pol II dephosphorylation). The BPC complex represses flowering by inhibiting the expression of several genes, including AGL6, FT, FUL and SOC1. Prevents the accumulation of intronic heterochromatin-containing genes (e.g. IBM1, At3g05410 and RPP7). The polypeptide is ASI1-immunoprecipitated protein 2 (Arabidopsis thaliana (Mouse-ear cress)).